A 617-amino-acid polypeptide reads, in one-letter code: Vacuolar protein sorting-associated protein 33B (617 aa).

Residue Ala2 is modified to N-acetylalanine.

It belongs to the STXBP/unc-18/SEC1 family. In terms of assembly, interacts with RAB11A and VIPAS39. Associates with adapter protein complex 3 (AP-3), clathrin:AP-3 and clathrin:HGS complexes. Phosphorylated on tyrosine residues.

The protein localises to the late endosome membrane. The protein resides in the lysosome membrane. It is found in the early endosome. It localises to the cytoplasmic vesicle. Its subcellular location is the clathrin-coated vesicle. The protein localises to the recycling endosome. May play a role in vesicle-mediated protein trafficking to lysosomal compartments and in membrane docking/fusion reactions of late endosomes/lysosomes. Required for proper trafficking and targeting of the collagen-modifying enzyme lysyl hydroxylase 3 (LH3) to intracellular collagen. Mediates phagolysosomal fusion in macrophages. Proposed to be involved in endosomal maturation implicating in part VIPAS39. In epithelial cells, the VPS33B:VIPAS39 complex may play a role in the apical RAB11A-dependentrecycling pathway and in the maintenance of the apical-basolateral polarity. Seems to be involved in the sorting of specific cargos from the trans-Golgi network to alpha-granule-destined multivesicular bodies (MVBs) promoting MVBs maturation in megakaryocytes. This is Vacuolar protein sorting-associated protein 33B (Vps33b) from Mus musculus (Mouse).